An 804-amino-acid polypeptide reads, in one-letter code: Leucine--tRNA ligase (804 aa).

Positions 39-50 (PYPSGKGLHVGH) match the 'HIGH' region motif. Positions 573–577 (KMSKS) match the 'KMSKS' region motif. Lys-576 contacts ATP.

The protein belongs to the class-I aminoacyl-tRNA synthetase family.

It is found in the cytoplasm. It catalyses the reaction tRNA(Leu) + L-leucine + ATP = L-leucyl-tRNA(Leu) + AMP + diphosphate. This chain is Leucine--tRNA ligase, found in Lactobacillus delbrueckii subsp. bulgaricus (strain ATCC 11842 / DSM 20081 / BCRC 10696 / JCM 1002 / NBRC 13953 / NCIMB 11778 / NCTC 12712 / WDCM 00102 / Lb 14).